Here is a 224-residue protein sequence, read N- to C-terminus: 7-cyano-7-deazaguanine synthase (224 aa).

9 to 19 (LSGGLDSATAL) is an ATP binding site. Residues Cys188, Cys198, Cys201, and Cys204 each coordinate Zn(2+).

It belongs to the QueC family. Zn(2+) serves as cofactor.

The catalysed reaction is 7-carboxy-7-deazaguanine + NH4(+) + ATP = 7-cyano-7-deazaguanine + ADP + phosphate + H2O + H(+). The protein operates within purine metabolism; 7-cyano-7-deazaguanine biosynthesis. Functionally, catalyzes the ATP-dependent conversion of 7-carboxy-7-deazaguanine (CDG) to 7-cyano-7-deazaguanine (preQ(0)). The sequence is that of 7-cyano-7-deazaguanine synthase from Thiobacillus denitrificans (strain ATCC 25259 / T1).